The primary structure comprises 245 residues: Thiopurine S-methyltransferase (245 aa).

Trp29 to Phe40 is an S-adenosyl-L-methionine binding site. Phe40 serves as a coordination point for substrate. Lys58 is modified (N6-acetyllysine). The S-adenosyl-L-methionine site is built by Leu69, Glu90, and Arg152.

The protein belongs to the class I-like SAM-binding methyltransferase superfamily. TPMT family. Monomer.

It is found in the cytoplasm. The catalysed reaction is S-adenosyl-L-methionine + a thiopurine = S-adenosyl-L-homocysteine + a thiopurine S-methylether.. This Bos taurus (Bovine) protein is Thiopurine S-methyltransferase (TPMT).